Here is a 78-residue protein sequence, read N- to C-terminus: Large ribosomal subunit protein bL28 (78 aa).

This sequence belongs to the bacterial ribosomal protein bL28 family.

The sequence is that of Large ribosomal subunit protein bL28 from Trichodesmium erythraeum (strain IMS101).